A 951-amino-acid polypeptide reads, in one-letter code: Kinase suppressor of Ras 2 (951 aa).

The segment at 237-298 (PPPPPLESGH…PGTPPPSSRK (62 aa)) is disordered. The span at 260 to 274 (RTPPRTPNIVTTVTP) shows a compositional bias: low complexity. Thr-273 and Thr-277 each carry phosphothreonine. The Phorbol-ester/DAG-type zinc finger occupies 413–457 (KHRFSTKYWMSQTCTVCGKGMLFGLKCKNCKLKCHNKCTKEAPPC). His-414, Cys-426, Cys-429, Cys-439, Cys-442, His-447, Cys-450, and Cys-457 together coordinate Zn(2+). Ser-475 is subject to Phosphoserine; by MARK3. Disordered stretches follow at residues 489-559 (RYSD…QKKN) and 614-634 (EPTS…DEFE). Residues 494 to 503 (HISQTLPKTN) are compositionally biased toward polar residues. Thr-498 is modified (phosphothreonine). The span at 518–531 (SSSNPSSTTSSTPS) shows a compositional bias: low complexity. The span at 532–552 (SPAPPLPPSATPPSPLHPSPQ) shows a compositional bias: pro residues. Positions 667–932 (LEIGELIGKG…TKLMDMLEKL (266 aa)) constitute a Protein kinase domain. Position 673–681 (673–681 (IGKGRFGQV)) interacts with ATP. Asp-787 (proton donor/acceptor) is an active-site residue. 2 residues coordinate ATP: Lys-789 and Asp-804.

It belongs to the protein kinase superfamily. TKL Ser/Thr protein kinase family. Heterodimerizes (via N-terminus) with BRAF (via N-terminus) in a MAP2K1/MEK1-dependent manner. Interacts with BRAF; this increases the low intrinsic protein kinase activity of KSR2. Interacts with MAP2K1, forming a heterodimer that can dimerize to form a heterotetramer. Interacts with MAP3K8, MAPK, RAS and RAF. In terms of processing, phosphorylated on Ser-475 by MARK3.

The protein resides in the cytoplasm. Its subcellular location is the membrane. The enzyme catalyses L-seryl-[protein] + ATP = O-phospho-L-seryl-[protein] + ADP + H(+). It catalyses the reaction L-threonyl-[protein] + ATP = O-phospho-L-threonyl-[protein] + ADP + H(+). Location-regulated scaffold connecting MEK to RAF. Has very low protein kinase activity and can phosphorylate MAP2K1 at several Ser and Thr residues with very low efficiency (in vitro). Acts as MAP2K1/MEK1-dependent allosteric activator of BRAF; upon binding to MAP2K1/MEK1, dimerizes with BRAF and promotes BRAF-mediated phosphorylation of MAP2K1/MEK1. Interaction with BRAF enhances KSR2-mediated phosphorylation of MAP2K1 (in vitro). Blocks MAP3K8 kinase activity and MAP3K8-mediated signaling. Acts as a negative regulator of MAP3K3-mediated activation of ERK, JNK and NF-kappa-B pathways, inhibiting MAP3K3-mediated interleukin-8 production. This Mus musculus (Mouse) protein is Kinase suppressor of Ras 2.